An 86-amino-acid chain; its full sequence is Toxin To8 (86 aa).

The signal sequence occupies residues 1–20 (MTRFVLFISCFFLIGMVVEC). The LCN-type CS-alpha/beta domain maps to 21 to 83 (KEGYLLGSRG…LWESDTNECG (63 aa)). Cystine bridges form between cysteine 31-cysteine 82, cysteine 35-cysteine 57, cysteine 43-cysteine 63, and cysteine 47-cysteine 65. Cysteine amide is present on cysteine 82.

It belongs to the long (4 C-C) scorpion toxin superfamily. Sodium channel inhibitor family. Beta subfamily. Expressed by the venom gland.

The protein resides in the secreted. Beta toxins bind voltage-independently at site-4 of sodium channels (Nav) and shift the voltage of activation toward more negative potentials thereby affecting sodium channel activation and promoting spontaneous and repetitive firing. The chain is Toxin To8 from Tityus obscurus (Amazonian scorpion).